Reading from the N-terminus, the 161-residue chain is 2-C-methyl-D-erythritol 2,4-cyclodiphosphate synthase (161 aa).

Residues Asp10 and His12 each coordinate a divalent metal cation. Residues 10–12 (DVH) and 36–37 (HS) each bind 4-CDP-2-C-methyl-D-erythritol 2-phosphate. His44 lines the a divalent metal cation pocket. 4-CDP-2-C-methyl-D-erythritol 2-phosphate-binding positions include 58-60 (DIG), 63-67 (FPDTD), 134-137 (TTTE), Phe141, and Arg144.

It belongs to the IspF family. In terms of assembly, homotrimer. It depends on a divalent metal cation as a cofactor.

The catalysed reaction is 4-CDP-2-C-methyl-D-erythritol 2-phosphate = 2-C-methyl-D-erythritol 2,4-cyclic diphosphate + CMP. It participates in isoprenoid biosynthesis; isopentenyl diphosphate biosynthesis via DXP pathway; isopentenyl diphosphate from 1-deoxy-D-xylulose 5-phosphate: step 4/6. Its function is as follows. Involved in the biosynthesis of isopentenyl diphosphate (IPP) and dimethylallyl diphosphate (DMAPP), two major building blocks of isoprenoid compounds. Catalyzes the conversion of 4-diphosphocytidyl-2-C-methyl-D-erythritol 2-phosphate (CDP-ME2P) to 2-C-methyl-D-erythritol 2,4-cyclodiphosphate (ME-CPP) with a corresponding release of cytidine 5-monophosphate (CMP). This is 2-C-methyl-D-erythritol 2,4-cyclodiphosphate synthase from Shewanella putrefaciens (strain CN-32 / ATCC BAA-453).